Here is a 42-residue protein sequence, read N- to C-terminus: Profilin (42 aa).

It belongs to the profilin family. Occurs in many kinds of cells as a complex with monomeric actin in a 1:1 ratio.

Its subcellular location is the cytoplasm. The protein localises to the cytoskeleton. Functionally, binds to actin and affects the structure of the cytoskeleton. At high concentrations, profilin prevents the polymerization of actin, whereas it enhances it at low concentrations. In Plantago lanceolata (English plantain), this protein is Profilin.